The following is a 321-amino-acid chain: Glucokinase (321 aa).

8–13 (GDVGGT) lines the ATP pocket.

The protein belongs to the bacterial glucokinase family.

It localises to the cytoplasm. It catalyses the reaction D-glucose + ATP = D-glucose 6-phosphate + ADP + H(+). This is Glucokinase from Escherichia coli O127:H6 (strain E2348/69 / EPEC).